A 103-amino-acid chain; its full sequence is uncharacterized protein (103 aa).

2 stretches are compositionally biased toward polar residues: residues 1-10 and 18-28; these read MSNSCSTSSY and TRSGSNVNRNY. The disordered stretch occupies residues 1-28; sequence MSNSCSTSSYPIRRKTPTRSGSNVNRNY.

This is an uncharacterized protein from Acanthamoeba polyphaga mimivirus (APMV).